Reading from the N-terminus, the 634-residue chain is MSIYVTFKGQVQKICISSGTILQELISTHYPNKNIIACAIDGIMADINTEINENQKIELYDFDSKEGQHVYWHSSAHILGNALVNLYQCKLVNGPALDEGFYYDIDIERPIREEDFADIEKEMQRIINKNIDFRKKMIKKDDLLKMYKDNDYKVHFINNIPDNLISVYYNDEFYDMCQGPHIQSTGLVKAFKILKSSSCYFLNSADNQILQRIYGISFPNKTLLKEYEEKVQKAKEMDHRKIGKELNLYFFHEYSPGSCFWLPDGVVIYNRLMEFLRKEYIKRGFKEVITPNIFHIDLWKESGHYQNYKENIYGISGEDFALKPMNCPGHCIIFKSVERSYKELPLRYADFGVLHRNECSGSLTGLTRVRRFQQDDAHIFTSKSSIKEEIENAIGFLKTVYSIFNFKYELFLSTRPTKFLGTIEEWDVAEKSLKDAIIDSGHTYTLNEGDGAFYGPKIDIILHDILNRKIQCATIQLDFQLPQRFDLKFKNELGMYETPVIIHRAILGSFERFIAILIESYGKHLPFWLHPRQVGLVTIDCKHENYMYTVEKSMLNVVLDLGIRKYTDPKDTLNKKIRKATLDGCKIICILGDKEMEKNEVNVRIGNKTRTYKIEELLEKIKVSIETKKEFIFN.

Residues Met1–Asp61 enclose the TGS domain.

The protein belongs to the class-II aminoacyl-tRNA synthetase family.

The protein localises to the cytoplasm. The enzyme catalyses tRNA(Thr) + L-threonine + ATP = L-threonyl-tRNA(Thr) + AMP + diphosphate + H(+). The chain is Probable threonine--tRNA ligase, cytoplasmic from Enterocytozoon bieneusi (strain H348) (Microsporidian parasite).